A 229-amino-acid polypeptide reads, in one-letter code: Urease accessory protein UreF (229 aa).

It belongs to the UreF family. As to quaternary structure, ureD, UreF and UreG form a complex that acts as a GTP-hydrolysis-dependent molecular chaperone, activating the urease apoprotein by helping to assemble the nickel containing metallocenter of UreC. The UreE protein probably delivers the nickel.

Its subcellular location is the cytoplasm. Required for maturation of urease via the functional incorporation of the urease nickel metallocenter. The protein is Urease accessory protein UreF of Ralstonia pickettii (strain 12J).